The primary structure comprises 500 residues: Formate-nitrite transporter 3 (500 aa).

Topologically, residues 1–31 (MVLAASPEAYRKVIEYGIKKTKLRIDRLFLQ) are cytoplasmic. Residues 32 to 52 (AIMAGIYVGMAGHACTALAGA) form a helical membrane-spanning segment. At 53-69 (YSTDPANPLAVSKATQK) the chain is on the extracellular side. The chain crosses the membrane as a helical span at residues 70–90 (FLYASLFPVAFIAIIFTGAEL). Residues 91-113 (FTGNTMTMLVCLLERRVTALQLC) are Cytoplasmic-facing. A helical transmembrane segment spans residues 114–134 (INWICSLVGNWAGALFAAYFL). The Extracellular segment spans residues 135–164 (SYLPGVLQDPDHLHYLEDVAAHKTELSFLQ). A helical membrane pass occupies residues 165–185 (CFCLAVGCNTFVCLAVWFVIA). Residues 186-192 (SDDAAGK) lie on the Cytoplasmic side of the membrane. Residues 193 to 213 (IMSMWFPIVSFCVAGYEHIIA) traverse the membrane as a helical segment. Over 214-237 (NFYTLQCALMHGVGPGVGTVILKN) the chain is Extracellular. Residues 238–258 (FIPTLLGNIVGGCGLVGAVYW) form a helical membrane-spanning segment. Over 259 to 500 (YNFYPTVCVV…ALEEHPASTI (242 aa)) the chain is Cytoplasmic. Residues 411-500 (PLRENSGVPS…ALEEHPASTI (90 aa)) are disordered. Composition is skewed to basic and acidic residues over residues 428-444 (GRVR…RGGE) and 466-485 (FHPH…ETRV).

This sequence belongs to the FNT transporter (TC 1.A.16) family. In terms of assembly, homopentamer.

The protein resides in the cell membrane. The enzyme catalyses (S)-lactate(in) + H(+)(in) = (S)-lactate(out) + H(+)(out). It catalyses the reaction formate(in) + H(+)(in) = formate(out) + H(+)(out). The catalysed reaction is pyruvate(out) + H(+)(out) = pyruvate(in) + H(+)(in). It carries out the reaction acetate(out) + H(+)(out) = acetate(in) + H(+)(in). Inhibited by p-chloromercuribenzene sulfonate (pCMBS). Methyl methanethiosulfonate (MMTS) inhibits L-lactate but not formate transport. Inhibited by the Malaria Box compound MMV007839. Inhibited by BH-296, BH-317, BH-326 and BH-388 compounds. Monocarboxylate-proton symporter; active in acidic-to-neutral pH range. Transports L-lactate and formate. This chain is Formate-nitrite transporter 3, found in Toxoplasma gondii (strain ATCC 50611 / Me49).